A 399-amino-acid chain; its full sequence is Probable protein phosphatase 2C 28 (399 aa).

The PPM-type phosphatase domain occupies 48–356 (EFSMAVVQAN…DDITVIVVFL (309 aa)). Residues D87, G88, D288, and D347 each coordinate Mn(2+).

Belongs to the PP2C family. Mg(2+) serves as cofactor. The cofactor is Mn(2+).

The catalysed reaction is O-phospho-L-seryl-[protein] + H2O = L-seryl-[protein] + phosphate. The enzyme catalyses O-phospho-L-threonyl-[protein] + H2O = L-threonyl-[protein] + phosphate. This is Probable protein phosphatase 2C 28 from Oryza sativa subsp. japonica (Rice).